The primary structure comprises 209 residues: MVFRFLGNNNNNNNELPDQQLINEIGYLSNFSNEQLEQLLDIIFEFMIIQKSEQLLNQIQEFSNEHSINENTLKNIIRGCIIFFKSSAKNNLTIDHLREDCIQFKLDEEQSKLVSTKYKQHYIEISRSLVGNSLTINQVLDMQWRFGVTTSSSEFTKSNTTGSTFLQLKLVLDKGNNIKEDVHMELTLPQFYEFLKEMQSAKASLEYFN.

Positions 138–209 constitute a COMM domain; it reads QVLDMQWRFG…SAKASLEYFN (72 aa).

This sequence belongs to the COMM domain-containing protein 7 family. As to quaternary structure, component of the commander complex consisting of the CCC subcomplex and the retriever subcomplex. Component of the CCC subcomplex.

Functionally, scaffold protein in the commander complex that is essential for endosomal recycling of transmembrane cargos; the commander complex is composed of the CCC subcomplex and the retriever subcomplex. This is COMM domain-containing protein 7 (commd7) from Dictyostelium discoideum (Social amoeba).